Reading from the N-terminus, the 433-residue chain is MSKIVKVIGREIIDSRGNPTVEAEVHLEGGFVGLAAAPSGASTGSREALELRDGDKSRFMGKGVLKAVDAVNGPIAQAVIGQDAKDQANIDKIMIDLDGTENKSQFGANAILAVSLANAKAAAAAKGMPLYEHIAELNGTPGKFSMPLPMMNIINGGEHADNNVDIQEFMIQPIGAKTLKEAVRIGSEVFHNLAKVLKAKGMSTAVGDEGGYAPNLESNAAALAAIKEAVEQAGYVLGKDVTLAMDCAASEFYNPETGNYELKGEGKTFTSQEFTHYLEDLTRKYPIVSIEDGLNESDWEGFAYQTKVLGEKIQLVGDDLFVTNTKILKEGIEKGIANSILIKFNQIGSLTETLAAIKMAKDAGYTAVISHRSGETEDATIADLAVGTAAGQIKTGSMSRSDRVAKYNQLIRIEEALGNRAPFYGLKEVKGQA.

Glutamine 167 is a (2R)-2-phosphoglycerate binding site. Catalysis depends on glutamate 209, which acts as the Proton donor. The Mg(2+) site is built by aspartate 246, glutamate 291, and aspartate 318. Lysine 343, arginine 372, serine 373, and lysine 394 together coordinate (2R)-2-phosphoglycerate. Catalysis depends on lysine 343, which acts as the Proton acceptor.

The protein belongs to the enolase family. In terms of assembly, component of the RNA degradosome, a multiprotein complex involved in RNA processing and mRNA degradation. It depends on Mg(2+) as a cofactor.

The protein resides in the cytoplasm. Its subcellular location is the secreted. It is found in the cell surface. The enzyme catalyses (2R)-2-phosphoglycerate = phosphoenolpyruvate + H2O. Its pathway is carbohydrate degradation; glycolysis; pyruvate from D-glyceraldehyde 3-phosphate: step 4/5. In terms of biological role, catalyzes the reversible conversion of 2-phosphoglycerate (2-PG) into phosphoenolpyruvate (PEP). It is essential for the degradation of carbohydrates via glycolysis. In Photorhabdus laumondii subsp. laumondii (strain DSM 15139 / CIP 105565 / TT01) (Photorhabdus luminescens subsp. laumondii), this protein is Enolase.